The following is a 153-amino-acid chain: MDQETVGNVVLLAIVTLISVIQNGFFAHKVEHESKTQNGRSFQRTGTLAFERVYTANQNCVDAYPTFLVMLWSAGLLCSQVPAAFAGLMYLFVRQKYFVGYLGERRQSTPGYIFGKRIILFLFLMSLAGIFNYYLILFFGSDFENYIKTITTT.

Over 1-8 (MDQETVGN) the chain is Lumenal. The helical transmembrane segment at 9–30 (VVLLAIVTLISVIQNGFFAHKV) threads the bilayer. Over 31–52 (EHESKTQNGRSFQRTGTLAFER) the chain is Cytoplasmic. The helical transmembrane segment at 53 to 77 (VYTANQNCVDAYPTFLVMLWSAGLL) threads the bilayer. The Lumenal portion of the chain corresponds to 78–80 (CSQ). Residues 81–102 (VPAAFAGLMYLFVRQKYFVGYL) traverse the membrane as a helical segment. Residues 103 to 107 (GERRQ) lie on the Cytoplasmic side of the membrane. The stretch at 108–115 (STPGYIFG) is an intramembrane region. Residues 116–128 (KRIILFLFLMSLA) form a helical membrane-spanning segment. The Lumenal portion of the chain corresponds to 129–153 (GIFNYYLILFFGSDFENYIKTITTT).

This sequence belongs to the MAPEG family. As to quaternary structure, homotrimer. Interacts with LTC4S and ALOX5.

The protein resides in the nucleus membrane. Its subcellular location is the endoplasmic reticulum membrane. Required for leukotriene biosynthesis by ALOX5 (5-lipoxygenase). Anchors ALOX5 to the membrane. Binds arachidonic acid, and could play an essential role in the transfer of arachidonic acid to ALOX5. Binds to MK-886, a compound that blocks the biosynthesis of leukotrienes. The chain is Arachidonate 5-lipoxygenase-activating protein (ALOX5AP) from Equus caballus (Horse).